The chain runs to 661 residues: Putative DUF21 domain-containing protein At3g13070, chloroplastic (661 aa).

A chloroplast-targeting transit peptide spans 1–71; sequence MMGMALELSV…RSCEFSYRSR (71 aa). The next 5 membrane-spanning stretches (helical) occupy residues 105–125, 162–182, 213–233, 239–259, and 285–305; these read GIVIGALVCGVFLYGCQKVLA, GLILAALLSLSAFFSMAETSI, FLTTILIGTTVVNIAATALVT, IFGEAGVSAATGLMTVAILLL, and WLSLVLYPVGRIVTYLSMGIL. The CNNM transmembrane domain maps to 154–340; sequence VLTVLREQGL…ELSGAIEEEE (187 aa). CBS domains are found at residues 359–420 and 426–484; these read MTPL…LLES and MAHK…IFDE. 2 disordered regions span residues 559-578 and 628-661; these read ESWEEDGEEEEGKQERQEPK and SSEEDDGNLSNEEDQSENAVLDEHVLADNSKKQQ. Acidic residues-rich tracts occupy residues 560-570 and 630-643; these read SWEEDGEEEEG and EEDDGNLSNEEDQS. Residues 648-661 are compositionally biased toward basic and acidic residues; it reads LDEHVLADNSKKQQ.

It is found in the plastid. The protein resides in the chloroplast membrane. This is Putative DUF21 domain-containing protein At3g13070, chloroplastic (CBSDUFCH1) from Arabidopsis thaliana (Mouse-ear cress).